The sequence spans 126 residues: Small ribosomal subunit protein uS13c (126 aa).

The interval 100 to 126 (GQRTRTNARTRRGARQTVAGKKKAPSK) is disordered. The segment covering 101–126 (QRTRTNARTRRGARQTVAGKKKAPSK) has biased composition (basic residues).

This sequence belongs to the universal ribosomal protein uS13 family. Part of the 30S ribosomal subunit.

The protein localises to the plastid. The protein resides in the cyanelle. Functionally, located at the top of the head of the 30S subunit, it contacts several helices of the 16S rRNA. This chain is Small ribosomal subunit protein uS13c, found in Cyanophora paradoxa.